The following is a 1012-amino-acid chain: MHLTADDCEALSRSTEGLSSLTQPLNQRRSRGDVNRGLQPTHRTRTQPGAQGRQKNIMDYFKVSQRQQAVAGRTKDISIKEEVLDPFFAEDDESSISSVMETSGDSSSFLENEYMGNSRKRPLSSTAPGRLQIENDLWGEPEKKAVVVHPEHSQIKQELDDEIEIEPVPDSHYGLLGTRNWEVPQGSIEDLPDEVLRSIFAFLPVTDLYQSLSLVCRRWRIIVGDPWFIPWKKLYHQYLVKEDMALRRVEQVLQDFAITGQHKECILGLIRCVSTIPTSRNVDPSAVLQCLKGHHLFSRAEVCITNKLPHLQSKTGPEYMWAIITAMVLFSDGVRDIQRLMACLQRPCSSLSIVDVTETLYCIATLLYAMREKNINITNRIHYNIFYCLYLMENASVTAPQVVEEETPSSRCRQDFWSSSLSEVKLTHEQQRILNHKIERGQIVKIMAFAGTGKTSTLVKYAEKFADLSFLYVTFNKAVAERGRLVFPRNVTCKTFHSLAFGSVGKLYKEKGKLNFSKLSAYSVSFLIQNREGQSIFIRGKTVSQTLENFFASSDEEICEEHTPVWFKNTHGERKLVTPEEKRINVEEAKEIWRNMKKLDGDVERKYKITCDGYLKLWQLSKPQLSGYDAIFVDEAQDCTPAIVDIVLSQTCGVILVGDPHQQIYSFRGAVNTLYTVPHTHIYYLTQSFRFGPEIAYVGATILDVCKGIRNKTLVGGNQEGDVRGSMEGKITMLSRSNFTVFEDAAKLAGRERQIKIHIIGGLVRFGLSKIYDIWKLSQPADEREKANLVINDSFIKRWEENEGFIGLKDYATRVDDKELEMKIRIVEKFKERIPELVQKIESSHVLQEAMADYLIGTVHQAKGLEFDTVLIADDFVDVPCARDNNQRRPQFIIGMCPEDEWNLLYVAVTRAKKCLLMSQSLEHLLALAGEHFLRVELMGEAVKTGVACSTQQCTQTLQSGIRLVVKKLPLIHSNGSRDMGGYLCYSCVQKRFGSMTPLAFLPALQEEPIVL.

The tract at residues 1-54 is disordered; that stretch reads MHLTADDCEALSRSTEGLSSLTQPLNQRRSRGDVNRGLQPTHRTRTQPGAQGRQ. Over residues 12 to 27 the composition is skewed to polar residues; it reads SRSTEGLSSLTQPLNQ. The F-box domain maps to 185–234; it reads QGSIEDLPDEVLRSIFAFLPVTDLYQSLSLVCRRWRIIVGDPWFIPWKKL. A UvrD-like helicase ATP-binding domain is found at 427–692; it reads THEQQRILNH…YYLTQSFRFG (266 aa). 448 to 455 is an ATP binding site; sequence AFAGTGKT.

Belongs to the helicase family. UvrD subfamily. As to quaternary structure, part of the SCF (SKP1-CUL1-F-box) E3 ubiquitin-protein ligase complex SCF(FBH1).

The protein resides in the nucleus. The protein localises to the chromosome. The catalysed reaction is Couples ATP hydrolysis with the unwinding of duplex DNA by translocating in the 3'-5' direction.. It carries out the reaction ATP + H2O = ADP + phosphate + H(+). It functions in the pathway protein modification; protein ubiquitination. Functionally, 3'-5' DNA helicase and substrate-recognition component of the SCF(FBH1) E3 ubiquitin ligase complex that plays a key role in response to stalled/damaged replication forks. Involved in genome maintenance by acting as an anti-recombinogenic helicase and preventing extensive strand exchange during homologous recombination: promotes RAD51 filament dissolution from stalled forks, thereby inhibiting homologous recombination and preventing excessive recombination. Also promotes cell death and DNA double-strand breakage in response to replication stress: promotes the endonucleolytic DNA cleavage following prolonged replication stress via its helicase activity, possibly to eliminate cells with excessive replication stress. In Gallus gallus (Chicken), this protein is F-box DNA helicase 1.